Here is a 117-residue protein sequence, read N- to C-terminus: Large ribosomal subunit protein bL20 (117 aa).

It belongs to the bacterial ribosomal protein bL20 family.

Binds directly to 23S ribosomal RNA and is necessary for the in vitro assembly process of the 50S ribosomal subunit. It is not involved in the protein synthesizing functions of that subunit. The chain is Large ribosomal subunit protein bL20 from Campylobacter jejuni subsp. jejuni serotype O:6 (strain 81116 / NCTC 11828).